A 332-amino-acid polypeptide reads, in one-letter code: Holliday junction branch migration complex subunit RuvB (332 aa).

Residues 1-181 (MSRILDNEIM…FGITGHMEYY (181 aa)) are large ATPase domain (RuvB-L). ATP contacts are provided by residues leucine 20, arginine 21, glycine 62, lysine 65, threonine 66, threonine 67, 128–130 (EDF), arginine 171, tyrosine 181, and arginine 218. Threonine 66 contacts Mg(2+). A small ATPAse domain (RuvB-S) region spans residues 182–252 (AHADLTEIVE…ITDKALTMLD (71 aa)). The segment at 255 to 332 (HEGLDYVDQK…EHLGYEYNEK (78 aa)) is head domain (RuvB-H). 4 residues coordinate DNA: arginine 291, arginine 310, arginine 312, and arginine 315.

This sequence belongs to the RuvB family. Homohexamer. Forms an RuvA(8)-RuvB(12)-Holliday junction (HJ) complex. HJ DNA is sandwiched between 2 RuvA tetramers; dsDNA enters through RuvA and exits via RuvB. An RuvB hexamer assembles on each DNA strand where it exits the tetramer. Each RuvB hexamer is contacted by two RuvA subunits (via domain III) on 2 adjacent RuvB subunits; this complex drives branch migration. In the full resolvosome a probable DNA-RuvA(4)-RuvB(12)-RuvC(2) complex forms which resolves the HJ.

The protein localises to the cytoplasm. It catalyses the reaction ATP + H2O = ADP + phosphate + H(+). In terms of biological role, the RuvA-RuvB-RuvC complex processes Holliday junction (HJ) DNA during genetic recombination and DNA repair, while the RuvA-RuvB complex plays an important role in the rescue of blocked DNA replication forks via replication fork reversal (RFR). RuvA specifically binds to HJ cruciform DNA, conferring on it an open structure. The RuvB hexamer acts as an ATP-dependent pump, pulling dsDNA into and through the RuvAB complex. RuvB forms 2 homohexamers on either side of HJ DNA bound by 1 or 2 RuvA tetramers; 4 subunits per hexamer contact DNA at a time. Coordinated motions by a converter formed by DNA-disengaged RuvB subunits stimulates ATP hydrolysis and nucleotide exchange. Immobilization of the converter enables RuvB to convert the ATP-contained energy into a lever motion, pulling 2 nucleotides of DNA out of the RuvA tetramer per ATP hydrolyzed, thus driving DNA branch migration. The RuvB motors rotate together with the DNA substrate, which together with the progressing nucleotide cycle form the mechanistic basis for DNA recombination by continuous HJ branch migration. Branch migration allows RuvC to scan DNA until it finds its consensus sequence, where it cleaves and resolves cruciform DNA. This Streptococcus pneumoniae (strain CGSP14) protein is Holliday junction branch migration complex subunit RuvB.